The following is a 140-amino-acid chain: Fluoride-specific ion channel FluC 1 (140 aa).

Transmembrane regions (helical) follow at residues 3–23, 38–58, 80–100, and 113–133; these read TGAT…GAAA, APLW…GLVL, ILYP…STVM, and IAGV…ALWC. Na(+)-binding residues include G91 and T94.

Belongs to the fluoride channel Fluc/FEX (TC 1.A.43) family.

Its subcellular location is the cell membrane. It catalyses the reaction fluoride(in) = fluoride(out). With respect to regulation, na(+) is not transported, but it plays an essential structural role and its presence is essential for fluoride channel function. In terms of biological role, fluoride-specific ion channel. Important for reducing fluoride concentration in the cell, thus reducing its toxicity. The polypeptide is Fluoride-specific ion channel FluC 1 (Corynebacterium jeikeium (strain K411)).